We begin with the raw amino-acid sequence, 419 residues long: UDP-N-acetylglucosamine 1-carboxyvinyltransferase (419 aa).

22 to 23 (KN) contributes to the phosphoenolpyruvate binding site. Position 93 (Arg-93) interacts with UDP-N-acetyl-alpha-D-glucosamine. The active-site Proton donor is the Cys-117. Cys-117 carries the post-translational modification 2-(S-cysteinyl)pyruvic acid O-phosphothioketal. Residues Asp-306 and Ile-328 each coordinate UDP-N-acetyl-alpha-D-glucosamine.

This sequence belongs to the EPSP synthase family. MurA subfamily.

It localises to the cytoplasm. It carries out the reaction phosphoenolpyruvate + UDP-N-acetyl-alpha-D-glucosamine = UDP-N-acetyl-3-O-(1-carboxyvinyl)-alpha-D-glucosamine + phosphate. It functions in the pathway cell wall biogenesis; peptidoglycan biosynthesis. Its function is as follows. Cell wall formation. Adds enolpyruvyl to UDP-N-acetylglucosamine. This Magnetococcus marinus (strain ATCC BAA-1437 / JCM 17883 / MC-1) protein is UDP-N-acetylglucosamine 1-carboxyvinyltransferase.